Consider the following 222-residue polypeptide: MITNESIVAEIVTDIPLSADIFRKYGIDFCCGGNISINEAVKNKKVDAETLIDEINELPNHDQGNINVKYLDAPSLIQYIQSRYHETMREEFKNLSPYVTKVAKVHGPNHPFLIQLQDLYRQYRDGMLEHMAQEDEHDFPALIKLSRGEQVDHSSDIIQSLVDDHTQTGQLLEDMRELTSQYQPPSEACQTWRLVYHRLMNLERETHEHVHLENHVLFNKFS.

It belongs to the RIC family. ScdA subfamily. As to quaternary structure, homodimer.

The protein localises to the cytoplasm. Di-iron-containing protein involved in the repair of iron-sulfur clusters damaged by oxidative and nitrosative stress conditions. The protein is Iron-sulfur cluster repair protein ScdA (scdA) of Staphylococcus haemolyticus (strain JCSC1435).